A 265-amino-acid polypeptide reads, in one-letter code: Neuronal membrane glycoprotein M6-b (265 aa).

The chain crosses the membrane as a helical span at residues 31–51 (GGVPYASLVATILCFSGVALF). Asn-73 carries an N-linked (GlcNAc...) asparagine glycan. 2 consecutive transmembrane segments (helical) span residues 90–110 (VIYGIASFFFLYVIILLAEGF) and 136–156 (FVFLTYVLGVAWLGVFGFSAV). N-linked (GlcNAc...) asparagine glycosylation is present at Asn-177. A helical membrane pass occupies residues 224-244 (LFIVACAGAGATVIALLIYMM). At Ser-257 the chain carries Phosphoserine.

Belongs to the myelin proteolipid protein family. Interacts with SERT.

The protein localises to the membrane. It is found in the cell membrane. May be involved in neural development. Involved in regulation of osteoblast function and bone formation. Involved in matrix vesicle release by osteoblasts; this function seems to involve maintenance of the actin cytoskeleton. May be involved in cellular trafficking of SERT and thereby in regulation of serotonin uptake. The chain is Neuronal membrane glycoprotein M6-b (GPM6B) from Pongo abelii (Sumatran orangutan).